The sequence spans 106 residues: MICOS complex subunit MIC12 (106 aa).

A helical membrane pass occupies residues 11-27 (VKWTLSVGVIGSVFYLY).

The protein belongs to the MICOS complex subunit Mic12 family. In terms of assembly, component of the mitochondrial contact site and cristae organizing system (MICOS) complex.

The protein resides in the mitochondrion inner membrane. Functionally, component of the MICOS complex, a large protein complex of the mitochondrial inner membrane that plays crucial roles in the maintenance of crista junctions, inner membrane architecture, and formation of contact sites to the outer membrane. The polypeptide is MICOS complex subunit MIC12 (AIM5) (Saccharomyces cerevisiae (strain RM11-1a) (Baker's yeast)).